The following is a 303-amino-acid chain: Methionyl-tRNA formyltransferase (303 aa).

110-113 (SLLP) is a (6S)-5,6,7,8-tetrahydrofolate binding site.

The protein belongs to the Fmt family.

The catalysed reaction is L-methionyl-tRNA(fMet) + (6R)-10-formyltetrahydrofolate = N-formyl-L-methionyl-tRNA(fMet) + (6S)-5,6,7,8-tetrahydrofolate + H(+). Its function is as follows. Attaches a formyl group to the free amino group of methionyl-tRNA(fMet). The formyl group appears to play a dual role in the initiator identity of N-formylmethionyl-tRNA by promoting its recognition by IF2 and preventing the misappropriation of this tRNA by the elongation apparatus. The protein is Methionyl-tRNA formyltransferase of Campylobacter lari (strain RM2100 / D67 / ATCC BAA-1060).